Reading from the N-terminus, the 530-residue chain is Hyalin (530 aa).

HYR domains lie at 1-66 (NVEI…TVTA), 67-150 (TDSI…NVVE), 151-234 (VDTT…NVVE), 235-319 (VDTT…NVVE), 320-403 (VDTT…NIVE), 404-486 (EDTT…TVNT), and 487-530 (VDTT…ASLV).

In terms of assembly, homooligomer in presence of calcium. In terms of processing, glycosylated.

It is found in the secreted. Its subcellular location is the extracellular space. The protein localises to the extracellular matrix. Major constituent of the hyaline layer. The hyaline layer of echinoderm embryos is an extraembryonic matrix that functions as a substrate for cell adhesion through early development. The chain is Hyalin from Lytechinus variegatus (Green sea urchin).